The following is a 428-amino-acid chain: Serine--tRNA ligase (428 aa).

L-serine is bound at residue 231–233; it reads TAE. Position 262–264 (262–264) interacts with ATP; the sequence is RSE. Residue Glu-285 coordinates L-serine. 349–352 serves as a coordination point for ATP; it reads EISS. Ser-385 contacts L-serine.

The protein belongs to the class-II aminoacyl-tRNA synthetase family. Type-1 seryl-tRNA synthetase subfamily. Homodimer. The tRNA molecule binds across the dimer.

The protein localises to the cytoplasm. The enzyme catalyses tRNA(Ser) + L-serine + ATP = L-seryl-tRNA(Ser) + AMP + diphosphate + H(+). It carries out the reaction tRNA(Sec) + L-serine + ATP = L-seryl-tRNA(Sec) + AMP + diphosphate + H(+). It participates in aminoacyl-tRNA biosynthesis; selenocysteinyl-tRNA(Sec) biosynthesis; L-seryl-tRNA(Sec) from L-serine and tRNA(Sec): step 1/1. In terms of biological role, catalyzes the attachment of serine to tRNA(Ser). Is also able to aminoacylate tRNA(Sec) with serine, to form the misacylated tRNA L-seryl-tRNA(Sec), which will be further converted into selenocysteinyl-tRNA(Sec). The chain is Serine--tRNA ligase from Staphylococcus epidermidis (strain ATCC 35984 / DSM 28319 / BCRC 17069 / CCUG 31568 / BM 3577 / RP62A).